Here is a 47-residue protein sequence, read N- to C-terminus: Zinc-finger protein TK0143 (47 aa).

The C2H2-type zinc-finger motif lies at 18 to 41; that stretch reads FRCPRCGMVFRSAKAYTRHVNKAH. Zn(2+) is bound by residues cysteine 20, cysteine 23, histidine 36, and histidine 41.

As to quaternary structure, crystallized in association with 70S ribosomes. It depends on Zn(2+) as a cofactor.

The polypeptide is Zinc-finger protein TK0143 (Thermococcus kodakarensis (strain ATCC BAA-918 / JCM 12380 / KOD1) (Pyrococcus kodakaraensis (strain KOD1))).